The following is an 876-amino-acid chain: Alanine--tRNA ligase (876 aa).

Positions 566, 570, 668, and 672 each coordinate Zn(2+).

The protein belongs to the class-II aminoacyl-tRNA synthetase family. It depends on Zn(2+) as a cofactor.

Its subcellular location is the cytoplasm. It carries out the reaction tRNA(Ala) + L-alanine + ATP = L-alanyl-tRNA(Ala) + AMP + diphosphate. Catalyzes the attachment of alanine to tRNA(Ala) in a two-step reaction: alanine is first activated by ATP to form Ala-AMP and then transferred to the acceptor end of tRNA(Ala). Also edits incorrectly charged Ser-tRNA(Ala) and Gly-tRNA(Ala) via its editing domain. The chain is Alanine--tRNA ligase from Petrotoga mobilis (strain DSM 10674 / SJ95).